The primary structure comprises 305 residues: MQQPHIPVMLNEMLKFLAPKAGESYLDCTFGAGGYSKALLENCDCYVTALDRDPNVIKKAEEIKHNYKDRFDFVETNFGNCFAKLESKKFDGIVLDLGVSSMQLDIPDRGFSFLHDGPLDMRMSGQGLSAEEFINTAEEKDLADVIYKYGDETFSRRIAKKIVEVRKAARIDSTGKLADIVHSCIGFRKGKIDPATKTFQAIRIYINNELGELEQFLANVKNILKKDGRLVVVSFHSLEDRIVKNFFKENSEKPVARSKYAKEDIMLNPDKWLKIITNKAEIPSDKEISLNVRARSAKLRAAKKI.

S-adenosyl-L-methionine is bound by residues 33-35 (GGY), D51, F82, D96, and Q103.

It belongs to the methyltransferase superfamily. RsmH family.

Its subcellular location is the cytoplasm. It carries out the reaction cytidine(1402) in 16S rRNA + S-adenosyl-L-methionine = N(4)-methylcytidine(1402) in 16S rRNA + S-adenosyl-L-homocysteine + H(+). In terms of biological role, specifically methylates the N4 position of cytidine in position 1402 (C1402) of 16S rRNA. This chain is Ribosomal RNA small subunit methyltransferase H, found in Rickettsia bellii (strain OSU 85-389).